Consider the following 166-residue polypeptide: Protein-export protein SecB (166 aa).

This sequence belongs to the SecB family. In terms of assembly, homotetramer, a dimer of dimers. One homotetramer interacts with 1 SecA dimer.

The protein localises to the cytoplasm. Its function is as follows. One of the proteins required for the normal export of preproteins out of the cell cytoplasm. It is a molecular chaperone that binds to a subset of precursor proteins, maintaining them in a translocation-competent state. It also specifically binds to its receptor SecA. This is Protein-export protein SecB from Cereibacter sphaeroides (strain ATCC 17029 / ATH 2.4.9) (Rhodobacter sphaeroides).